The sequence spans 397 residues: Lysophospholipid transporter LplT (397 aa).

Helical transmembrane passes span 16-36 (MMAVIVAQFLSAFGDNALLFA), 53-73 (VLQMVFVCAYILLAPFVGQVA), 91-111 (LGAVVIVFGGNPFVGYTLVGV), 139-159 (LMESSTIAAILIGSMAGGMLA), 164-184 (GAALGVCALAYAGAVGANLLI), 229-249 (WGAGVTLRFLLVLWVPVALGI), 257-277 (YLNAMVAVGIVAGAGAAAKLV), 282-302 (VSRCMPAGILIGIAVIFFSLQ), 304-324 (AALPAYLLLLLIGFFGGFFVV), 344-364 (IAVQNLGENTAMLLMLGLYSL), and 372-392 (VVGIGVGFGAIFALAIAGLWL).

This sequence belongs to the major facilitator superfamily. LplT (TC 2.A.1.42) family.

It localises to the cell inner membrane. Its function is as follows. Catalyzes the facilitated diffusion of 2-acyl-glycero-3-phosphoethanolamine (2-acyl-GPE) into the cell. This chain is Lysophospholipid transporter LplT, found in Cronobacter sakazakii (strain ATCC BAA-894) (Enterobacter sakazakii).